We begin with the raw amino-acid sequence, 130 residues long: Ribonuclease VapC46 (130 aa).

A PINc domain is found at 4–118 (IYLDSSAIVK…CTYDDRMRDA (115 aa)). 2 residues coordinate Mg(2+): Asp-7 and Asp-91.

Belongs to the PINc/VapC protein family. Mg(2+) serves as cofactor.

In terms of biological role, toxic component of a type II toxin-antitoxin (TA) system. An RNase. Upon expression in M.smegmatis inhibits colony formation. Its toxic effect is neutralized by coexpression with cognate antitoxin VapB46. The polypeptide is Ribonuclease VapC46 (Mycobacterium tuberculosis (strain ATCC 25618 / H37Rv)).